A 499-amino-acid chain; its full sequence is Potassium voltage-gated channel subfamily A member 2 (499 aa).

The interval 1 to 27 is disordered; that stretch reads MTVATGEPADEAAALPGHPQDTYDPEA. A tetramerization domain region spans residues 1-125; the sequence is MTVATGEPAD…YELGEEAMEM (125 aa). The Cytoplasmic portion of the chain corresponds to 1 to 160; the sequence is MTVATGEPAD…LLFEYPESSG (160 aa). A helical membrane pass occupies residues 161–182; the sequence is PARIIAIVSVMVILISIVSFCL. Residues 183–221 lie on the Extracellular side of the membrane; the sequence is ETLPIFRDENEDMHGGGVTFHTYSNSTIGYQQSTSFTDP. Residue asparagine 207 is glycosylated (N-linked (GlcNAc...) asparagine). The chain crosses the membrane as a helical span at residues 222-243; the sequence is FFIVETLCIIWFSFEFLVRFFA. A lipid anchor (S-palmitoyl cysteine) is attached at cysteine 244. Residues 244-254 are Cytoplasmic-facing; that stretch reads CPSKAGFFTNI. The chain crosses the membrane as a helical span at residues 255–275; it reads MNIIDIVAIIPYFITLGTELA. The Extracellular segment spans residues 276-289; the sequence is EKPEDAQQGQQAMS. A helical; Voltage-sensor membrane pass occupies residues 290-310; sequence LAILRVIRLVRVFRIFKLSRH. Residues 311-325 lie on the Cytoplasmic side of the membrane; it reads SKGLQILGQTLKASM. The tract at residues 312–325 is S4-S5 linker; the sequence is KGLQILGQTLKASM. A helical transmembrane segment spans residues 326–347; the sequence is RELGLLIFFLFIGVILFSSAVY. At 348–361 the chain is on the extracellular side; sequence FAEADERESQFPSI. Positions 362-373 form an intramembrane region, helical; it reads PDAFWWAVVSMT. A Selectivity filter motif is present at residues 374–379; sequence TVGYGD. An intramembrane segment occupies 374 to 381; the sequence is TVGYGDMV. Topologically, residues 382 to 388 are extracellular; sequence PTTIGGK. A helical membrane pass occupies residues 389 to 417; that stretch reads IVGSLCAIAGVLTIALPVPVIVSNFNYFY. Topologically, residues 418-499 are cytoplasmic; sequence HRETEGEEQA…VNITKMLTDV (82 aa). Tyrosine 429 carries the post-translational modification Phosphotyrosine. Phosphoserine is present on residues serine 434, serine 440, serine 441, and serine 449. Tyrosine 458 is subject to Phosphotyrosine. Phosphoserine is present on serine 468. The PDZ-binding signature appears at 497–499; it reads TDV.

Belongs to the potassium channel family. A (Shaker) (TC 1.A.1.2) subfamily. Kv1.2/KCNA2 sub-subfamily. Homotetramer and heterotetramer with other channel-forming alpha subunits, such as KCNA1, KCNA4, KCNA5, KCNA6 and KCNA7. Channel activity is regulated by interaction with the beta subunits, including KCNAB1 and KCNAB2. Identified in a complex with KCNA1 and KCNAB2. Identified in a complex with KCNA5 and KCNAB1. Interacts with the beta subunit KCNAB1. Identified in a complex with KCNA4 and FYN. Interacts with PTK2B. Interacts (via C-terminus) with CTTN. Interacts (via N-terminal cytoplasmic domain) with RHOA (GTP-bound form); this regulates channel activity by reducing location at the cell surface in response to CHRM1 activation. Interacts with DRD2. Interacts with SIGMAR1; cocaine consumption leads to increased interaction. Interacts with ADAM22. Interacts with CNTNAP2. Interacts (via C-terminus) with the PDZ domains of DLG1, DLG2 and DLG4. Interacts with ADAM11. Interacts with LYNX1. Phosphorylated on tyrosine residues; phosphorylation increases in response to ischemia. Phosphorylated on tyrosine residues by activated PTK2B/PYK2. Phosphorylation on tyrosine residues suppresses ion channel activity. Phosphorylated on tyrosine residues in response to CHRM1 activation; this abolishes interaction with CTTN. This is probably due to endocytosis of the phosphorylated channel subunits. Phosphorylated on serine residues in response to increased cAMP levels; phosphorylation is apparently not catalyzed by PKA. Post-translationally, N-glycosylated, with complex, sialylated N-glycans. Expressed in a wide variety of gastrointestinal smooth muscles. Not expressed in portal vein, renal artery, and uterus.

The protein localises to the cell membrane. The protein resides in the membrane. It localises to the cell projection. Its subcellular location is the axon. It is found in the synapse. The protein localises to the presynaptic cell membrane. The protein resides in the synaptosome. It localises to the endoplasmic reticulum membrane. Its subcellular location is the dendrite. It is found in the lamellipodium membrane. The protein localises to the cell junction. The protein resides in the paranodal septate junction. The catalysed reaction is K(+)(in) = K(+)(out). Its activity is regulated as follows. Inhibited by 4-aminopyridine (4-AP). Inhibited by dendrotoxin (DTX) and charybdotoxin (CTX), but not by tetraethylammonium (TEA). Inhibited by tityustoxin-K alpha (TsTX-Kalpha), a toxin that is highly specific for KCNA2. Inhibited by maurotoxin. Inhibited by kappaM conotoxins kappaM-RIIIJ and kappaM-RIIIK. Its function is as follows. Voltage-gated potassium channel that mediates transmembrane potassium transport in excitable membranes, primarily in the brain and the central nervous system, but also in the cardiovascular system. Prevents aberrant action potential firing and regulates neuronal output. Forms tetrameric potassium-selective channels through which potassium ions pass in accordance with their electrochemical gradient. The channel alternates between opened and closed conformations in response to the voltage difference across the membrane. Can form functional homotetrameric channels and heterotetrameric channels that contain variable proportions of KCNA1, KCNA2, KCNA4, KCNA5, KCNA6, KCNA7, and possibly other family members as well; channel properties depend on the type of alpha subunits that are part of the channel. Channel properties are modulated by cytoplasmic beta subunits that regulate the subcellular location of the alpha subunits and promote rapid inactivation of delayed rectifier potassium channels. In vivo, membranes probably contain a mixture of heteromeric potassium channel complexes, making it difficult to assign currents observed in intact tissues to any particular potassium channel family member. Homotetrameric KCNA2 forms a delayed-rectifier potassium channel that opens in response to membrane depolarization, followed by slow spontaneous channel closure. In contrast, a heteromultimer formed by KCNA2 and KCNA4 shows rapid inactivation. Regulates neuronal excitability and plays a role as pacemaker in the regulation of neuronal action potentials. KCNA2-containing channels play a presynaptic role and prevent hyperexcitability and aberrant action potential firing. Response to toxins that are selective for KCNA2-containing potassium channels suggests that in Purkinje cells, dendritic subthreshold KCNA2-containing potassium channels prevent random spontaneous calcium spikes, suppressing dendritic hyperexcitability without hindering the generation of somatic action potentials, and thereby play an important role in motor coordination. Plays a role in the induction of long-term potentiation of neuron excitability in the CA3 layer of the hippocampus. May function as down-stream effector for G protein-coupled receptors and inhibit GABAergic inputs to basolateral amygdala neurons. May contribute to the regulation of neurotransmitter release, such as gamma-aminobutyric acid (GABA). Contributes to the regulation of the axonal release of the neurotransmitter dopamine. Reduced KCNA2 expression plays a role in the perception of neuropathic pain after peripheral nerve injury, but not acute pain. Plays a role in the regulation of the time spent in non-rapid eye movement (NREM) sleep. This Canis lupus familiaris (Dog) protein is Potassium voltage-gated channel subfamily A member 2 (KCNA2).